Reading from the N-terminus, the 265-residue chain is Phosphonates import ATP-binding protein PhnC (265 aa).

The 245-residue stretch at 18-262 folds into the ABC transporter domain; sequence LVVEHLRKEY…HLKQIYGGEE (245 aa). 51 to 58 lines the ATP pocket; the sequence is GPSGTGKS.

This sequence belongs to the ABC transporter superfamily. Phosphonates importer (TC 3.A.1.9.1) family. In terms of assembly, the complex is composed of two ATP-binding proteins (PhnC), two transmembrane proteins (PhnE) and a solute-binding protein (PhnD).

It localises to the cell inner membrane. It carries out the reaction phosphonate(out) + ATP + H2O = phosphonate(in) + ADP + phosphate + H(+). Functionally, part of the ABC transporter complex PhnCDE involved in phosphonates import. Responsible for energy coupling to the transport system. The sequence is that of Phosphonates import ATP-binding protein PhnC from Nitratidesulfovibrio vulgaris (strain ATCC 29579 / DSM 644 / CCUG 34227 / NCIMB 8303 / VKM B-1760 / Hildenborough) (Desulfovibrio vulgaris).